The sequence spans 304 residues: Non-specific ribonucleoside hydrolase RihC (304 aa).

Residue H233 is part of the active site.

The protein belongs to the IUNH family. RihC subfamily.

Its function is as follows. Hydrolyzes both purine and pyrimidine ribonucleosides with a broad-substrate specificity. This Shigella dysenteriae serotype 1 (strain Sd197) protein is Non-specific ribonucleoside hydrolase RihC.